The sequence spans 514 residues: uncharacterized protein (514 aa).

A compositionally biased stretch (low complexity) spans methionine 1–proline 15. Positions methionine 1–serine 22 are disordered.

This is an uncharacterized protein from Ictaluridae (bullhead catfishes).